A 38-amino-acid polypeptide reads, in one-letter code: Large ribosomal subunit protein bL36 (38 aa).

It belongs to the bacterial ribosomal protein bL36 family.

This chain is Large ribosomal subunit protein bL36, found in Enterococcus faecalis (strain ATCC 700802 / V583).